The following is a 506-amino-acid chain: Tabersonine 6,7-epoxidase isoform 1 (506 aa).

Residues 1 to 21 (MEFVVSLFAFVVSCFILLKVA) form a helical membrane-spanning segment. Residues Asn173 and Asn261 are each glycosylated (N-linked (GlcNAc...) asparagine). Heme is bound at residue Cys441.

The protein belongs to the cytochrome P450 family. Requires heme as cofactor. As to expression, mainly expressed in roots.

Its subcellular location is the endoplasmic reticulum membrane. The catalysed reaction is (-)-tabersonine + reduced [NADPH--hemoprotein reductase] + O2 = lochnericine + oxidized [NADPH--hemoprotein reductase] + H2O + H(+). It participates in alkaloid biosynthesis. Component of the monoterpenoid indole alkaloids (MIAs, e.g. echitovenine, tabersonine, lochnericine, 19-hydroxytabersonine and horhammericine) biosynthetic pathway; MIAs are used in cancer treatment and other medical applications. Cytochrome P450 catalyzing the conversion of tabersonine to lochnericine. The sequence is that of Tabersonine 6,7-epoxidase isoform 1 from Catharanthus roseus (Madagascar periwinkle).